We begin with the raw amino-acid sequence, 411 residues long: Indian hedgehog protein (411 aa).

An N-terminal signal peptide occupies residues M1–G27. The N-palmitoyl cysteine moiety is linked to residue C28. Ca(2+) contacts are provided by E94, E95, D100, T130, E131, D134, and D136. Residues H145, D152, and H187 each coordinate Zn(2+). Residue G202 is the site of Cholesterol glycine ester attachment. Residue N282 is glycosylated (N-linked (GlcNAc...) asparagine).

This sequence belongs to the hedgehog family. As to quaternary structure, multimer. In terms of assembly, interacts with BOC and CDON. Interacts with PTCH1. Interacts with glypican GPC3. Post-translationally, cholesterylation is required for N-product targeting to lipid rafts and multimerization. In terms of processing, the C-terminal domain displays an autoproteolysis activity and a cholesterol transferase activity. Both activities result in the cleavage of the full-length protein and covalent attachment of a cholesterol moiety to the C-terminal of the newly generated N-product. The N-product is the active species in both local and long-range signaling, whereas the C-product is degraded in the endoplasmic reticulum. N-palmitoylation by HHAT of N-product is required for indian hedgehog protein N-product multimerization and full activity. As to expression, expressed in embryonic lung, and in adult kidney and liver.

The protein localises to the cell membrane. Its subcellular location is the endoplasmic reticulum membrane. It localises to the golgi apparatus membrane. It is found in the secreted. The catalysed reaction is glycyl-L-cysteinyl-[protein] + cholesterol + H(+) = [protein]-C-terminal glycyl cholesterol ester + N-terminal L-cysteinyl-[protein]. Functionally, plays a role in embryonic morphogenesis; it is involved in the regulation of endochondral skeleton formation, and the development of retinal pigment epithelium (RPE), photoreceptors and periocular tissues. The C-terminal part of the indian hedgehog protein precursor displays an autoproteolysis and a cholesterol transferase activity. Both activities result in the cleavage of the full-length protein into two parts followed by the covalent attachment of a cholesterol moiety to the C-terminal of the newly generated N-product. Both activities occur in the endoplasmic reticulum. Plays a role in hedgehog paracrine signaling. Associated with the very-low-density lipoprotein (VLDL) particles to function as a circulating morphogen for endothelial cell integrity maintenance. In terms of biological role, the dually lipidated indian hedgehog protein N-product is a morphogen which is essential for a variety of patterning events during development. Binds to the patched (PTCH1) receptor, which functions in association with smoothened (SMO), to activate the transcription of target genes. Plays a role in morphogenesis of the skeleton by coordinating growth and differentiation of the endochondral skeleton. Positively regulates PTHLH expression during endochondral bone formation preventing chondrocyte hypertrophy. In contrast, participates in normal chondrocyte proliferation in a PTHLH-independent pathway. The sequence is that of Indian hedgehog protein from Homo sapiens (Human).